A 159-amino-acid chain; its full sequence is Phosphodiesterase delta-like protein (159 aa).

The protein belongs to the PDE6D/unc-119 family.

This is Phosphodiesterase delta-like protein (pdl-1) from Caenorhabditis elegans.